We begin with the raw amino-acid sequence, 107 residues long: U1-lycotoxin-Ls1t (107 aa).

The first 20 residues, 1 to 20 (MMKVLVVVALLVTLISYSSS), serve as a signal peptide directing secretion. Positions 21–41 (EGIDDLEADELLSLMANEQTR) are excised as a propeptide. 4 disulfides stabilise this stretch: cysteine 44-cysteine 59, cysteine 51-cysteine 68, cysteine 58-cysteine 86, and cysteine 70-cysteine 84.

It belongs to the neurotoxin 19 (CSTX) family. 04 (U1-Lctx) subfamily. Expressed by the venom gland.

The protein localises to the secreted. In Lycosa singoriensis (Wolf spider), this protein is U1-lycotoxin-Ls1t.